Reading from the N-terminus, the 226-residue chain is MAKKLTKKTKAALGSFDPKQIYDLDKAIEIAKKTATTKFESSIDIAIKLNLDTTKADQQLRGAISLPHNVSKPIRILAITDQQAEAKQAGADFVGEIDKINEIKAGWMDFDVIITNPKFMIELGKLGKILGPKGLMPNPKTGTVTQDIATAITEYRKGKKEYRTDTFGNIHMTVGKQSTDTNKIVENANALIDLIKSRRPSAVKGVYIQNISVSSTMGPGVKVKIN.

The protein belongs to the universal ribosomal protein uL1 family. As to quaternary structure, part of the 50S ribosomal subunit.

Binds directly to 23S rRNA. The L1 stalk is quite mobile in the ribosome, and is involved in E site tRNA release. In terms of biological role, protein L1 is also a translational repressor protein, it controls the translation of the L11 operon by binding to its mRNA. The protein is Large ribosomal subunit protein uL1 of Mycoplasmoides gallisepticum (strain R(low / passage 15 / clone 2)) (Mycoplasma gallisepticum).